A 365-amino-acid chain; its full sequence is Pyruvate dehydrogenase E1 component subunit beta, mitochondrial (365 aa).

A mitochondrion-targeting transit peptide spans 1–24 (MLRTRLIQAASSAQRAFSTSQKAL). Glu85 is a thiamine diphosphate binding site. Ile138, Ala186, Ile187, and Asp189 together coordinate K(+).

The cofactor is thiamine diphosphate. In terms of tissue distribution, expressed in salivary glands (at protein level).

Its subcellular location is the mitochondrion matrix. It catalyses the reaction N(6)-[(R)-lipoyl]-L-lysyl-[protein] + pyruvate + H(+) = N(6)-[(R)-S(8)-acetyldihydrolipoyl]-L-lysyl-[protein] + CO2. The pyruvate dehydrogenase complex catalyzes the overall conversion of pyruvate to acetyl-CoA and CO(2). Might play a role in regulating synapse structure formation at neuromuscular junctions. Might play a role in maintenance of mitochondrial morphology. The chain is Pyruvate dehydrogenase E1 component subunit beta, mitochondrial from Drosophila melanogaster (Fruit fly).